A 202-amino-acid polypeptide reads, in one-letter code: LexA repressor (202 aa).

The segment at residues 28-48 (RAEIAQQLGFRSPNAAEEHLK) is a DNA-binding region (H-T-H motif). Active-site for autocatalytic cleavage activity residues include Ser119 and Lys156.

Belongs to the peptidase S24 family. In terms of assembly, homodimer.

It carries out the reaction Hydrolysis of Ala-|-Gly bond in repressor LexA.. Functionally, represses a number of genes involved in the response to DNA damage (SOS response), including recA and lexA. Binds to the 16 bp palindromic sequence 5'-CTGTATATATATACAG-3'. In the presence of single-stranded DNA, RecA interacts with LexA causing an autocatalytic cleavage which disrupts the DNA-binding part of LexA, leading to derepression of the SOS regulon and eventually DNA repair. This chain is LexA repressor, found in Pectobacterium carotovorum subsp. carotovorum (strain PC1).